The primary structure comprises 278 residues: 4-hydroxy-tetrahydrodipicolinate reductase (278 aa).

NAD(+)-binding positions include 13-18 and 111-113; these read GAAGKM and GTT. Histidine 167 acts as the Proton donor/acceptor in catalysis. (S)-2,3,4,5-tetrahydrodipicolinate is bound at residue histidine 168. Lysine 171 serves as the catalytic Proton donor. 177-178 contacts (S)-2,3,4,5-tetrahydrodipicolinate; that stretch reads GT.

This sequence belongs to the DapB family.

It localises to the cytoplasm. The enzyme catalyses (S)-2,3,4,5-tetrahydrodipicolinate + NAD(+) + H2O = (2S,4S)-4-hydroxy-2,3,4,5-tetrahydrodipicolinate + NADH + H(+). The catalysed reaction is (S)-2,3,4,5-tetrahydrodipicolinate + NADP(+) + H2O = (2S,4S)-4-hydroxy-2,3,4,5-tetrahydrodipicolinate + NADPH + H(+). It participates in amino-acid biosynthesis; L-lysine biosynthesis via DAP pathway; (S)-tetrahydrodipicolinate from L-aspartate: step 4/4. Catalyzes the conversion of 4-hydroxy-tetrahydrodipicolinate (HTPA) to tetrahydrodipicolinate. The sequence is that of 4-hydroxy-tetrahydrodipicolinate reductase from Nostoc punctiforme (strain ATCC 29133 / PCC 73102).